Consider the following 202-residue polypeptide: Pectinesterase inhibitor 11 (202 aa).

The first 21 residues, 1-21 (MAKQIFYTLFLFLLSTAILTA), serve as a signal peptide directing secretion. A disulfide bridge links cysteine 43 with cysteine 52. Asparagine 76 carries N-linked (GlcNAc...) asparagine glycosylation. A disulfide bridge links cysteine 109 with cysteine 160.

This sequence belongs to the PMEI family.

Its subcellular location is the secreted. The protein resides in the extracellular space. It localises to the apoplast. In terms of biological role, pectin methylesterase (PME) inhibitor involved in the maintenance of cell wall integrity in response to necrotrophic pathogens. Modulates PME activity and pectin methylesterification during infection by Botrytis cinerea and contributes to resistance against the pathogen. The chain is Pectinesterase inhibitor 11 from Arabidopsis thaliana (Mouse-ear cress).